The sequence spans 406 residues: Imidazolonepropionase (406 aa).

Positions 72 and 74 each coordinate Fe(3+). Residues histidine 72 and histidine 74 each coordinate Zn(2+). 3 residues coordinate 4-imidazolone-5-propanoate: arginine 81, tyrosine 144, and histidine 177. Tyrosine 144 serves as a coordination point for N-formimidoyl-L-glutamate. Position 242 (histidine 242) interacts with Fe(3+). Histidine 242 serves as a coordination point for Zn(2+). Glutamine 245 is a binding site for 4-imidazolone-5-propanoate. Aspartate 317 serves as a coordination point for Fe(3+). Residue aspartate 317 coordinates Zn(2+). The N-formimidoyl-L-glutamate site is built by asparagine 319 and glycine 321. Threonine 322 provides a ligand contact to 4-imidazolone-5-propanoate.

The protein belongs to the metallo-dependent hydrolases superfamily. HutI family. It depends on Zn(2+) as a cofactor. Fe(3+) serves as cofactor.

It is found in the cytoplasm. The enzyme catalyses 4-imidazolone-5-propanoate + H2O = N-formimidoyl-L-glutamate. The protein operates within amino-acid degradation; L-histidine degradation into L-glutamate; N-formimidoyl-L-glutamate from L-histidine: step 3/3. Its function is as follows. Catalyzes the hydrolytic cleavage of the carbon-nitrogen bond in imidazolone-5-propanoate to yield N-formimidoyl-L-glutamate. It is the third step in the universal histidine degradation pathway. The sequence is that of Imidazolonepropionase from Yersinia enterocolitica serotype O:8 / biotype 1B (strain NCTC 13174 / 8081).